A 186-amino-acid chain; its full sequence is UPF0340 protein SEQ_1951 (186 aa).

This sequence belongs to the UPF0340 family.

The polypeptide is UPF0340 protein SEQ_1951 (Streptococcus equi subsp. equi (strain 4047)).